Here is a 172-residue protein sequence, read N- to C-terminus: Neudesin (172 aa).

Residues 1 to 31 (MVGPAPRRRLRPLAALALVLALAPGLPTARA) form the signal peptide. Residues 44–129 (VRLFTEEELA…KELEALDEVF (86 aa)) enclose the Cytochrome b5 heme-binding domain. An N6-acetyllysine modification is found at lysine 136. The disordered stretch occupies residues 151 to 172 (DGSPNLDFKPEDQPHFDIKDEF). The span at 158 to 172 (FKPEDQPHFDIKDEF) shows a compositional bias: basic and acidic residues.

Belongs to the cytochrome b5 family. MAPR subfamily. As to quaternary structure, interacts with PINK1 and PARK7. As to expression, ubiquitously expressed with high expression in heart. Over-expressed in various tumors including carcinomas of the uterine cervix, lymphoma, colon, lung, skin and leukemia, as well as carcinoma of the breast.

The protein localises to the secreted. The protein resides in the extracellular space. It localises to the mitochondrion. Its subcellular location is the endoplasmic reticulum. Its function is as follows. Acts as a neurotrophic factor in postnatal mature neurons enhancing neuronal survival. Promotes cell proliferation and neurogenesis in undifferentiated neural progenitor cells at the embryonic stage and inhibits differentiation of astrocytes. Its neurotrophic activity is exerted via MAPK1/ERK2, MAPK3/ERK1 and AKT1/AKT pathways. Neurotrophic activity is enhanced by binding to heme. Also acts as an anorexigenic neurotrophic factor that contributes to energy balance. This Homo sapiens (Human) protein is Neudesin.